The following is a 502-amino-acid chain: 9-beta-pimara-7,15-diene oxidase (502 aa).

Helical transmembrane passes span 4-26 and 106-128; these read INSE…ALLT and LLVS…GAYW. Cysteine 438 serves as a coordination point for heme.

The protein belongs to the cytochrome P450 family. The cofactor is heme.

It is found in the membrane. It carries out the reaction 9beta-pimara-7,15-diene + 3 reduced [NADPH--hemoprotein reductase] + 3 O2 = 9beta-pimara-7,15-dien-19-oate + 3 oxidized [NADPH--hemoprotein reductase] + 4 H2O + 4 H(+). In terms of biological role, involved in momilactone phytoalexins biosynthesis; acts as a multifunctional diterpene oxidase. Participates in the biosynthetic steps between 9-beta-pimara-7,15-diene and 3-beta-hydroxy-9-beta-pimara-7,15-dien-19,6-beta-olide. Also catalyzes consecutive oxidations at C19 of syn-stemod-13(17)-ene. The chain is 9-beta-pimara-7,15-diene oxidase (CYP99A3) from Oryza sativa subsp. japonica (Rice).